The following is a 919-amino-acid chain: TRPM8 channel-associated factor 2 (919 aa).

Positions 543 to 842 (DVWMSTGLYL…TYLQLQEVFG (300 aa)) constitute a Peptidase M60 domain.

This sequence belongs to the TCAF family. In terms of assembly, interacts with TRPM8 (via N-terminus and C-terminus domains); the interaction inhibits TRPM8 channel activity. Interacts with TRPV6.

It localises to the cell membrane. Negatively regulates the plasma membrane cation channel TRPM8 activity. Involved in the recruitment of TRPM8 to the cell surface. Promotes prostate cancer cell migration stimulation in a TRPM8-dependent manner. This is TRPM8 channel-associated factor 2 from Mus musculus (Mouse).